The chain runs to 377 residues: Probable pectin lyase D (377 aa).

An N-terminal signal peptide occupies residues 1-17; that stretch reads MRVSAFALLAAAATAAA. Intrachain disulfides connect Cys-80-Cys-99 and Cys-89-Cys-223. Asn-126 carries N-linked (GlcNAc...) asparagine glycosylation. Residue Arg-253 is part of the active site. Cys-321 and Cys-329 are disulfide-bonded.

It belongs to the polysaccharide lyase 1 family.

It localises to the secreted. It carries out the reaction Eliminative cleavage of (1-&gt;4)-alpha-D-galacturonan methyl ester to give oligosaccharides with 4-deoxy-6-O-methyl-alpha-D-galact-4-enuronosyl groups at their non-reducing ends.. Pectinolytic enzymes consist of four classes of enzymes: pectin lyase, polygalacturonase, pectin methylesterase and rhamnogalacturonase. Among pectinolytic enzymes, pectin lyase is the most important in depolymerization of pectin, since it cleaves internal glycosidic bonds of highly methylated pectins. The protein is Probable pectin lyase D (pelD) of Emericella nidulans (strain FGSC A4 / ATCC 38163 / CBS 112.46 / NRRL 194 / M139) (Aspergillus nidulans).